The sequence spans 368 residues: DNA replication and repair protein RecF (368 aa).

30–37 contributes to the ATP binding site; it reads GKNGSGKT.

It belongs to the RecF family.

The protein resides in the cytoplasm. Functionally, the RecF protein is involved in DNA metabolism; it is required for DNA replication and normal SOS inducibility. RecF binds preferentially to single-stranded, linear DNA. It also seems to bind ATP. This chain is DNA replication and repair protein RecF, found in Marinomonas sp. (strain MWYL1).